A 396-amino-acid chain; its full sequence is MATEATLAPNVTWWAPSNASGCPGCGVNASDDPGSAPRPLDAWLVPLFFATLMLLGLVGNSLVIYVICRHKHMQTVTNFYIANLAATDVTFLLCCVPFTALLYPLPAWVLGDFMCKFVNYIQQVSVQATCATLTAMSVDRWYVTVFPLRALHRRTPRLALAVSLSIWVGSAAVSAPVLALHRLSPGPRTYCSEAFPSRALERAFALYNLLALYLLPLLATCACYGAMLRHLGRAAVRPAPTDGALQGQLLAQRAGAVRTKVSRLVAAVVLLFAACWGPIQLFLVLQALGPSGAWHPRSYAAYAVKIWAHCMSYSNSALNPLLYAFLGSHFRQAFCRVCPCCRQRQRRPHTSAHSDRAATHTVPHSRAAHPVRIRSPEPGNPVVRSPCAQSERTASL.

Residues 1-43 lie on the Extracellular side of the membrane; the sequence is MATEATLAPNVTWWAPSNASGCPGCGVNASDDPGSAPRPLDAW. N-linked (GlcNAc...) asparagine glycosylation is found at Asn10, Asn18, and Asn28. A helical membrane pass occupies residues 44–66; it reads LVPLFFATLMLLGLVGNSLVIYV. Over 67-78 the chain is Cytoplasmic; that stretch reads ICRHKHMQTVTN. A helical membrane pass occupies residues 79-101; the sequence is FYIANLAATDVTFLLCCVPFTAL. Residues 102–116 lie on the Extracellular side of the membrane; it reads LYPLPAWVLGDFMCK. The cysteines at positions 115 and 191 are disulfide-linked. Residues 117-138 traverse the membrane as a helical segment; sequence FVNYIQQVSVQATCATLTAMSV. The Cytoplasmic portion of the chain corresponds to 139–157; sequence DRWYVTVFPLRALHRRTPR. A helical transmembrane segment spans residues 158 to 180; that stretch reads LALAVSLSIWVGSAAVSAPVLAL. Topologically, residues 181–203 are extracellular; it reads HRLSPGPRTYCSEAFPSRALERA. The chain crosses the membrane as a helical span at residues 204-224; sequence FALYNLLALYLLPLLATCACY. Topologically, residues 225 to 260 are cytoplasmic; sequence GAMLRHLGRAAVRPAPTDGALQGQLLAQRAGAVRTK. The helical transmembrane segment at 261-283 threads the bilayer; that stretch reads VSRLVAAVVLLFAACWGPIQLFL. The Extracellular portion of the chain corresponds to 284-305; that stretch reads VLQALGPSGAWHPRSYAAYAVK. Residues 306–330 form a helical membrane-spanning segment; sequence IWAHCMSYSNSALNPLLYAFLGSHF. The Cytoplasmic segment spans residues 331–396; it reads RQAFCRVCPC…CAQSERTASL (66 aa). Positions 349–396 are disordered; that stretch reads HTSAHSDRAATHTVPHSRAAHPVRIRSPEPGNPVVRSPCAQSERTASL. Residues 387–396 show a composition bias toward polar residues; that stretch reads CAQSERTASL.

This sequence belongs to the G-protein coupled receptor 1 family. In terms of tissue distribution, highest level in the heart and 15- and 17-day embryos. Low level in other tissues. Colocalized with gonadotropin-releasing hormone (GnRH) neurons in the hypothalamus.

It localises to the cell membrane. Its function is as follows. Receptor for metastin (kisspeptin-52 or kp-52), a C-terminally amidated peptide of KiSS1. KiSS1 is a metastasis suppressor protein. Activation of the receptor inhibits cell proliferation and cell migration, key characteristics of tumor metastasis. The receptor is essential for normal gonadotropin-released hormone physiology and for puberty. The hypothalamic KiSS1/KISS1R system is a pivotal factor in central regulation of the gonadotropic axis at puberty and in adulthood. Analysis of the transduction pathways activated by the receptor identifies coupling to phospholipase C and intracellular calcium release through pertussis toxin-insensitive G(q) proteins. This is KiSS-1 receptor (Kiss1r) from Mus musculus (Mouse).